The primary structure comprises 189 residues: Lipid A acyltransferase PagP (189 aa).

The first 24 residues, 1–24 (MLRRFSLFSLGFLGWLLVSGNASA), serve as a signal peptide directing secretion. Catalysis depends on residues histidine 61, aspartate 104, and serine 105.

This sequence belongs to the lipid A palmitoyltransferase family. As to quaternary structure, homodimer.

The protein resides in the cell outer membrane. The enzyme catalyses a lipid A + a 1,2-diacyl-sn-glycero-3-phosphocholine = a hepta-acyl lipid A + a 2-acyl-sn-glycero-3-phosphocholine. It carries out the reaction a lipid IVA + a 1,2-diacyl-sn-glycero-3-phosphocholine = a lipid IVB + a 2-acyl-sn-glycero-3-phosphocholine. It catalyses the reaction a lipid IIA + a 1,2-diacyl-sn-glycero-3-phosphocholine = a lipid IIB + a 2-acyl-sn-glycero-3-phosphocholine. Transfers a fatty acid residue from the sn-1 position of a phospholipid to the N-linked hydroxyfatty acid chain on the proximal unit of lipid A or its precursors. In Klebsiella pneumoniae subsp. pneumoniae (strain ATCC 700721 / MGH 78578), this protein is Lipid A acyltransferase PagP.